A 329-amino-acid chain; its full sequence is Protein RecA (329 aa).

63-70 (GNESSGKT) is an ATP binding site.

This sequence belongs to the RecA family.

The protein resides in the cytoplasm. In terms of biological role, can catalyze the hydrolysis of ATP in the presence of single-stranded DNA, the ATP-dependent uptake of single-stranded DNA by duplex DNA, and the ATP-dependent hybridization of homologous single-stranded DNAs. It interacts with LexA causing its activation and leading to its autocatalytic cleavage. The sequence is that of Protein RecA from Malacoplasma penetrans (strain HF-2) (Mycoplasma penetrans).